The chain runs to 272 residues: NAD kinase (272 aa).

Aspartate 62 functions as the Proton acceptor in the catalytic mechanism. NAD(+) is bound by residues 62 to 63, arginine 67, 129 to 130, arginine 140, lysine 157, aspartate 159, isoleucine 167, 170 to 175, alanine 194, and glutamine 229; these read DG, NE, and SSYSSS.

This sequence belongs to the NAD kinase family. Requires a divalent metal cation as cofactor.

The protein resides in the cytoplasm. It carries out the reaction NAD(+) + ATP = ADP + NADP(+) + H(+). Its function is as follows. Involved in the regulation of the intracellular balance of NAD and NADP, and is a key enzyme in the biosynthesis of NADP. Catalyzes specifically the phosphorylation on 2'-hydroxyl of the adenosine moiety of NAD to yield NADP. The sequence is that of NAD kinase from Thermoplasma acidophilum (strain ATCC 25905 / DSM 1728 / JCM 9062 / NBRC 15155 / AMRC-C165).